Reading from the N-terminus, the 66-residue chain is Large ribosomal subunit protein uL29 (66 aa).

Belongs to the universal ribosomal protein uL29 family.

The polypeptide is Large ribosomal subunit protein uL29 (Borreliella burgdorferi (strain ZS7) (Borrelia burgdorferi)).